An 881-amino-acid chain; its full sequence is DNA mismatch repair protein MutS (881 aa).

Glycine 605–serine 612 lines the ATP pocket.

It belongs to the DNA mismatch repair MutS family.

Its function is as follows. This protein is involved in the repair of mismatches in DNA. It is possible that it carries out the mismatch recognition step. This protein has a weak ATPase activity. The protein is DNA mismatch repair protein MutS of Limosilactobacillus reuteri subsp. reuteri (strain JCM 1112) (Lactobacillus reuteri).